Consider the following 135-residue polypeptide: Biglycan (135 aa).

LRR repeat units follow at residues 4 to 24, 25 to 46, 49 to 72, 73 to 95, and 96 to 117; these read KLNYLRISEAKLTGIPKDLPE, TLNELHLDHNKIQAIELEDLLR, KLYRLGLGHNQIRMIENGSLSFLP, TLRELHLDNNKLSRVPAGLPDLK, and LLQVVYLHSNNITKVGVNDFCP. An N-linked (GlcNAc...) asparagine glycan is attached at Asn65. A glycan (N-linked (GlcNAc...) asparagine) is linked at Asn106.

The protein belongs to the small leucine-rich proteoglycan (SLRP) family. SLRP class I subfamily. As to quaternary structure, homodimer. Forms a ternary complex with MFAP2 and ELN. The two attached glycosaminoglycan chains can be either chondroitin sulfate or dermatan sulfate. In terms of tissue distribution, found in several connective tissues, especially in articular cartilages.

The protein resides in the secreted. It is found in the extracellular space. The protein localises to the extracellular matrix. Functionally, may be involved in collagen fiber assembly. The protein is Biglycan (BGN) of Oryctolagus cuniculus (Rabbit).